An 855-amino-acid chain; its full sequence is MNENIDKDFSSHTPMMQQYLKLKAQHPEILLFYRMGDFYELFYDDAKRASQLLDISLTKRGASAGEPIPMAGIPYHAVENYLAKLVNQGESVAICEQIGDPATSKGPVERKVVRIVTPGTISDEALLQERQDNLLAAIWQDSKGFGYATLDISSGRFRLSEPADRETMAAELQRTNPAELLYAEDFAEMSLIEGRRGLRRRPLWEFEIDTARQQLNLQFGTRDLVGFGVENAPRGLCAAGCLLQYAKDTQRTTLPHIRSITMEREQDSIIMDAATRRNLEITQNLAGGAENTLASVLDCTVTPMGSRMLKRWLHMPVRDTRVLLERQQTIGALQDFTAELQPVLRQVGDLERILARLALRTARPRDLARMRHAFQQLPELRAQLETVDSAPVQALREKMGEFAELRDLLERAIIDTPPVLVRDGGVIASGYNEELDEWRALADGATDYLERLEVRERERTGLDTLKVGFNAVHGYYIQISRGQSHLAPINYMRRQTLKNAERYIIPELKEYEDKVLTSKGKALALEKQLYEELFDLLLPHLEALQQSASALAELDVLVNLAERAYTLNYTCPTFIDKPGIRITEGRHPVVEQVLNEPFIANPLNLSPQRRMLIITGPNMGGKSTYMRQTALIALMAYIGSYVPAQKVEIGPIDRIFTRVGAADDLASGRSTFMVEMTETANILHNATEYSLVLMDEIGRGTSTYDGLSLAWACAENLANKIKALTLFATHYFELTQLPEKMEGVANVHLDALEHGDTIAFMHSVQDGAASKSYGLAVAALAGVPKEVIKRARQKLRELESISPNAAATQVDGTQMSLLSVPEEISPAVEALENLDPDSLTPRQALEWIYRLKSLV.

An ATP-binding site is contributed by 616 to 623; sequence GPNMGGKS.

Belongs to the DNA mismatch repair MutS family.

In terms of biological role, this protein is involved in the repair of mismatches in DNA. It is possible that it carries out the mismatch recognition step. This protein has a weak ATPase activity. In Escherichia coli O139:H28 (strain E24377A / ETEC), this protein is DNA mismatch repair protein MutS.